Consider the following 274-residue polypeptide: 16S rRNA (guanine(1405)-N(7))-methyltransferase (274 aa).

S-adenosyl-L-methionine is bound by residues F64, 102–104 (HMS), R108, A133, D156, 182–183 (DL), L198, and Q207.

The protein belongs to the methyltransferase superfamily. Aminoglycoside resistance family.

The enzyme catalyses guanosine(1405) in 16S rRNA + S-adenosyl-L-methionine = N(7)-methylguanosine(1405) in 16S rRNA + S-adenosyl-L-homocysteine. Specifically methylates the N(7) position of guanine 1405 in 16S rRNA. Confers resistance to aminoglycosides. This Micromonospora rosea protein is 16S rRNA (guanine(1405)-N(7))-methyltransferase (grm).